Reading from the N-terminus, the 546-residue chain is Probable acyl-activating enzyme 21 (546 aa).

Belongs to the ATP-dependent AMP-binding enzyme family.

In terms of biological role, may act as an acid--thiol ligase that activates carboxylic acids by forming acyl-CoAs. The chain is Probable acyl-activating enzyme 21 (AEE21) from Arabidopsis thaliana (Mouse-ear cress).